Consider the following 426-residue polypeptide: RuvB-like protein 1 (426 aa).

Position 62 to 69 (62 to 69) interacts with ATP; the sequence is GPVGSGKT.

The protein belongs to the RuvB family. As to quaternary structure, component of the SWR1 chromatin remodeling complex, the INO80 chromatin remodeling complex, and of the R2TP complex.

It localises to the nucleus. It catalyses the reaction ATP + H2O = ADP + phosphate + H(+). Functionally, DNA helicase which participates in several chromatin remodeling complexes, including the SWR1 and the INO80 complexes. The SWR1 complex mediates the ATP-dependent exchange of histone H2A for the H2A variant HZT1 leading to transcriptional regulation of selected genes by chromatin remodeling. The INO80 complex remodels chromatin by shifting nucleosomes and is involved in DNA repair. Also involved in pre-rRNA processing. The chain is RuvB-like protein 1 (RVB1) from Encephalitozoon cuniculi (strain GB-M1) (Microsporidian parasite).